A 94-amino-acid chain; its full sequence is Integration host factor subunit beta (94 aa).

This sequence belongs to the bacterial histone-like protein family. Heterodimer of an alpha and a beta chain.

Functionally, this protein is one of the two subunits of integration host factor, a specific DNA-binding protein that functions in genetic recombination as well as in transcriptional and translational control. This is Integration host factor subunit beta from Citrobacter koseri (strain ATCC BAA-895 / CDC 4225-83 / SGSC4696).